A 424-amino-acid chain; its full sequence is UPF0597 protein Shewana3_2972 (424 aa).

Belongs to the UPF0597 family.

The protein is UPF0597 protein Shewana3_2972 of Shewanella sp. (strain ANA-3).